Consider the following 594-residue polypeptide: Gamma-terpinene synthase, chloroplastic (594 aa).

The transit peptide at Met1 to Ser44 directs the protein to the chloroplast. Residues Asp347 and Asp351 each contribute to the Mn(2+) site. The DDXXD motif motif lies at Asp347–Asp351. Homodimerization regions lie at residues Tyr353–Leu359 and Glu425–Pro462. Mn(2+) contacts are provided by Asp491 and Glu499.

It belongs to the terpene synthase family. Homodimer. Requires Mn(2+) as cofactor. Mg(2+) is required as a cofactor. In terms of tissue distribution, expressed in peltate glandular trichomes.

The protein resides in the plastid. The protein localises to the chloroplast. The enzyme catalyses (2E)-geranyl diphosphate = gamma-terpinene + diphosphate. It carries out the reaction (2E)-geranyl diphosphate = alpha-terpinene + diphosphate. The protein operates within secondary metabolite biosynthesis; terpenoid biosynthesis. Involved in the biosynthesis of phenolic monoterpenes natural products thymol and carvacrol which have a broad range of biological activities acting as antimicrobial compounds, insecticides, antioxidants and pharmaceutical agents. Monoterpene synthase which catalyzes the conversion of geranyl diphosphate (GPP) to gamma-terpinene and the minor products alpha-thujene, alpha-terpinene, myrcene, sabinene, (+)-R-limonene, alpha-pinene and alpha-phellandrene. This is Gamma-terpinene synthase, chloroplastic from Origanum vulgare (Wild marjoram).